Consider the following 717-residue polypeptide: Asp/Glu-specific dipeptidyl-peptidase (717 aa).

An N-terminal signal peptide occupies residues Met1 to Ala21. Catalysis depends on charge relay system residues His85, Asp226, and Ser652.

This sequence belongs to the peptidase S46 family.

Its subcellular location is the secreted. It localises to the cell surface. Enzyme activity is completely blocked by diisopropyl-fluorophosphates, moderately by phenylmethylsulfonyl fluoride (PMSF) and 4-(2-methyl)benzenesulfonyl fluoride, and slightly by pepstatin in vitro. Its function is as follows. Catalyzes the removal of dipeptides from the N-terminus of oligopeptides. Shows a strict specificity for acidic residues (Asp or Glu) in the P1 position, and has a hydrophobic residue preference at the P2 position. Is likely involved in amino acid metabolism and bacterial growth/survival of asaccharolytic P.endodontalis, that utilizes amino acids from extracellular proteinaceous nutrients as energy and carbon sources. The protein is Asp/Glu-specific dipeptidyl-peptidase (dpp11) of Porphyromonas endodontalis (strain ATCC 35406 / DSM 24491 / JCM 8526 / CCUG 16442 / BCRC 14492 / NCTC 13058 / HG 370) (Bacteroides endodontalis).